A 108-amino-acid polypeptide reads, in one-letter code: Large ribosomal subunit protein uL24 (108 aa).

The protein belongs to the universal ribosomal protein uL24 family. Part of the 50S ribosomal subunit.

Its function is as follows. One of two assembly initiator proteins, it binds directly to the 5'-end of the 23S rRNA, where it nucleates assembly of the 50S subunit. In terms of biological role, one of the proteins that surrounds the polypeptide exit tunnel on the outside of the subunit. The polypeptide is Large ribosomal subunit protein uL24 (Pelobacter propionicus (strain DSM 2379 / NBRC 103807 / OttBd1)).